A 264-amino-acid polypeptide reads, in one-letter code: Small ribosomal subunit protein uS3 (264 aa).

The KH type-2 domain occupies 39 to 107 (VREYLKKKLK…PVHVNIEEIR (69 aa)). A disordered region spans residues 217-264 (EEVAEEKRPRRNARPGDRRPRRDGEGAPAGARRGAPRRGGAGDGKTGE). Over residues 230–241 (RPGDRRPRRDGE) the composition is skewed to basic and acidic residues. Gly residues predominate over residues 253 to 264 (RRGGAGDGKTGE).

Belongs to the universal ribosomal protein uS3 family. Part of the 30S ribosomal subunit. Forms a tight complex with proteins S10 and S14.

Binds the lower part of the 30S subunit head. Binds mRNA in the 70S ribosome, positioning it for translation. The chain is Small ribosomal subunit protein uS3 from Paraburkholderia phymatum (strain DSM 17167 / CIP 108236 / LMG 21445 / STM815) (Burkholderia phymatum).